The chain runs to 246 residues: Octanoyltransferase (246 aa).

Positions 54 to 240 (DPPPEAVWLL…CLEPNADAAI (187 aa)) constitute a BPL/LPL catalytic domain. Residues 96 to 103 (RGGEVTHH), 163 to 165 (AIG), and 176 to 178 (GVA) contribute to the substrate site. The Acyl-thioester intermediate role is filled by Cys-194.

The protein belongs to the LipB family.

Its subcellular location is the cytoplasm. The enzyme catalyses octanoyl-[ACP] + L-lysyl-[protein] = N(6)-octanoyl-L-lysyl-[protein] + holo-[ACP] + H(+). It functions in the pathway protein modification; protein lipoylation via endogenous pathway; protein N(6)-(lipoyl)lysine from octanoyl-[acyl-carrier-protein]: step 1/2. In terms of biological role, catalyzes the transfer of endogenously produced octanoic acid from octanoyl-acyl-carrier-protein onto the lipoyl domains of lipoate-dependent enzymes. Lipoyl-ACP can also act as a substrate although octanoyl-ACP is likely to be the physiological substrate. This Synechococcus sp. (strain WH7803) protein is Octanoyltransferase.